The primary structure comprises 80 residues: MPKKNDAPASFETALNELEQIVNRLESGDLPLEDALNEFERGVQLARQGQVKLQQAEQRVQILLSDSEDAAPTPFTPDAE.

It belongs to the XseB family. Heterooligomer composed of large and small subunits.

It localises to the cytoplasm. It carries out the reaction Exonucleolytic cleavage in either 5'- to 3'- or 3'- to 5'-direction to yield nucleoside 5'-phosphates.. In terms of biological role, bidirectionally degrades single-stranded DNA into large acid-insoluble oligonucleotides, which are then degraded further into small acid-soluble oligonucleotides. The sequence is that of Exodeoxyribonuclease 7 small subunit from Enterobacter sp. (strain 638).